Here is a 465-residue protein sequence, read N- to C-terminus: D-ornithine/D-lysine decarboxylase (465 aa).

Lysine 80 carries the N6-(pyridoxal phosphate)lysine modification. Residues glycine 259 and 307 to 310 contribute to the pyridoxal 5'-phosphate site; that span reads EPGR. Cysteine 387 functions as the Proton donor in the catalytic mechanism. Tyrosine 422 contacts pyridoxal 5'-phosphate.

It belongs to the Orn/Lys/Arg decarboxylase class-II family. In terms of assembly, homodimer. Pyridoxal 5'-phosphate is required as a cofactor.

The enzyme catalyses D-ornithine + H(+) = putrescine + CO2. The catalysed reaction is D-lysine + H(+) = cadaverine + CO2. Its function is as follows. Catalyzes the decarboxylation of D-ornithine and D-lysine. Ornithine is likely the physiological substrate. Has no detectable diaminopimelate decarboxylase activity in vitro. The chain is D-ornithine/D-lysine decarboxylase from Salmonella typhimurium (strain LT2 / SGSC1412 / ATCC 700720).